The chain runs to 71 residues: Conotoxin TxMMSK-05 (71 aa).

The first 20 residues, 1-20 (MMSKLGALLIICLLLFPLTA), serve as a signal peptide directing secretion. The propeptide occupies 21 to 52 (VPLDGDQHADRPAERLQDDISSKHHPMFDAVR). Cystine bridges form between Cys-54–Cys-70, Cys-55–Cys-66, and Cys-60–Cys-69.

The protein belongs to the conotoxin M superfamily. As to expression, expressed by the venom duct.

The protein resides in the secreted. The protein is Conotoxin TxMMSK-05 of Conus textile (Cloth-of-gold cone).